The sequence spans 452 residues: Scaffold protein ILK (452 aa).

Met-1 carries the N-acetylmethionine modification. ANK repeat units lie at residues 2–30 (DDIF…LNQG), 31–63 (DDHG…INVM), 64–96 (NRGD…INAV), 97–129 (NEHG…VSIC), and 130–174 (NKYG…GTTR). An interaction with LIMS1 region spans residues 33-139 (HGFSPLHWAC…NKYGEMPVDK (107 aa)). Thr-173 carries the post-translational modification Phosphothreonine; by PAK1. The interval 180 to 212 (GTLNKHSGIDFKQLNFLTKLNENHSGELWKGRW) is PH-like; mediates interaction with TGFB1I1. At Ser-186 the chain carries Phosphoserine. The Protein kinase domain occupies 193–446 (LNFLTKLNEN…PKFDMIVPIL (254 aa)). Asn-200, Asn-202, His-203, Ser-204, and Lys-220 together coordinate ATP. Position 246 is a phosphoserine; by PAK1 (Ser-246). ATP contacts are provided by His-270, Met-272, and Asn-279. Asp-339 is a Mg(2+) binding site. Lys-341 contacts ATP. Residues 363 to 371 (KKPEDTNRR) carry the Nuclear localization signal motif. Position 426 is an N6-acetyllysine (Lys-426).

It belongs to the protein kinase superfamily. TKL Ser/Thr protein kinase family. As to quaternary structure, component of the heterotrimeric IPP (ILK-PINCH-PARVIN) complex composed of ILK, LIMS1/PINCH and PARVA; the complex binds to F-actin via the C-terminal tail of LIMS1 and the N-terminal region of PARVA, promoting F-actin filament bundling. Formation of the IPP complex is dependent on protein kinase C and precedes integrin-mediated cell adhesion and spreading. ILK also interacts with LIMS2/PINCH2 and with PARVB and PARVG which may substitute for LIMS1 and PARVA in the IPP complex; PARVA and PARVB compete for the same binding site. Interaction with PARVG promotes the establishment of cell polarity required for leukocyte migration. Interacts with the cytoplasmic domain of integrin ITGB1 and may also interact with integrins ITGB2, ITGB3 and/or ITGB5. Interacts probably also with TGFB1I1. Interacts (via ANK repeats) with EPHA1 (via SAM domain); stimulated by EFNA1 but independent of the kinase activity of EPHA1. Interacts with FERMT2. Interacts with LIMD2; leading to activate the protein kinase activity. Interacts with PXN/PAXILLIN (via LD motif 4). Interacts with CCDC25 (via cytoplasmic region); initiating the ILK-PARVB cascade to induce cytoskeleton rearrangement and directional migration of cells. Interacts with IQGAP1; the interaction is required for localization of IQGAP1 to the cell cortex. Post-translationally, phosphorylation by PAK1 modulates ILK subcellular location by promoting its nuclear export. In terms of tissue distribution, highly expressed in heart followed by skeletal muscle, pancreas and kidney. Weakly expressed in placenta, lung and liver.

The protein localises to the cell junction. It localises to the focal adhesion. The protein resides in the cell membrane. It is found in the cell projection. Its subcellular location is the lamellipodium. The protein localises to the cytoplasm. It localises to the myofibril. The protein resides in the sarcomere. It is found in the nucleus. Its subcellular location is the cytoskeleton. The protein localises to the microtubule organizing center. It localises to the centrosome. The protein resides in the cell cortex. Its function is as follows. Scaffold protein which mediates protein-protein interactions during a range of cellular events including focal adhesion assembly, cell adhesion and cell migration. Regulates integrin-mediated signal transduction by contributing to inside-out integrin activation. Recruits PARVA and LIMS1/PITCH to form the heterotrimeric IPP (ILK-PINCH-PARVIN) complex which binds to F-actin via the C-terminal tail of LIMS1 and the N-terminal region of PARVA, promoting F-actin filament bundling, a process required to generate force for actin cytoskeleton reorganization and subsequent dynamic cell adhesion events such as cell spreading and migration. Binding to PARVA promotes effective assembly of ILK into focal adhesions while PARVA-bound ILK can simultaneously engage integrin-beta cytoplasmic tails to mediate cell adhesion. Plays a role with PARVG in promoting the cell adhesion and spreading of leukocytes. Acts as an upstream effector of both AKT1/PKB and GSK3. Mediates trafficking of caveolae to the cell surface in an ITGB1-dependent manner by promoting the recruitment of IQGAP1 to the cell cortex which cooperates with its effector DIAPH1 to locally stabilize microtubules and allow stable insertion of caveolae into the plasma membrane. Required for the maintenance of mitotic spindle integrity by promoting phosphorylation of TACC3 by AURKA. Associates with chromatin and may act as a negative regulator of transcription when located in the nucleus. The protein is Scaffold protein ILK of Homo sapiens (Human).